The chain runs to 82 residues: Large ribosomal subunit protein uL23 (82 aa).

Belongs to the universal ribosomal protein uL23 family. Part of the 50S ribosomal subunit. Contacts protein L29.

Functionally, binds to 23S rRNA. One of the proteins that surrounds the polypeptide exit tunnel on the outside of the ribosome. In Methanospirillum hungatei JF-1 (strain ATCC 27890 / DSM 864 / NBRC 100397 / JF-1), this protein is Large ribosomal subunit protein uL23.